A 499-amino-acid polypeptide reads, in one-letter code: Tektin-like protein 1 (499 aa).

Coiled-coil stretches lie at residues 197 to 227 (SMLT…LKTL) and 297 to 317 (LNEA…MAKN). Position 372 is a phosphotyrosine (Y372).

In terms of assembly, microtubule inner protein component of sperm flagellar doublet microtubules.

It localises to the cytoplasm. The protein localises to the cytoskeleton. It is found in the flagellum axoneme. In terms of biological role, microtubule inner protein (MIP) part of the dynein-decorated doublet microtubules (DMTs) in sperm flagellar axoneme, which is required for motile flagellum beating. Forms an extensive interaction network cross-linking the lumen of axonemal doublet microtubules. The chain is Tektin-like protein 1 from Homo sapiens (Human).